The primary structure comprises 114 residues: T cell receptor beta variable 6-9 (114 aa).

The signal sequence occupies residues 1–21 (MSIGLLCCVAFSLLWAGPVNA). Residues 22 to 114 (GVTQTPKFHI…TSVYFCASSY (93 aa)) enclose the Ig-like domain. A disulfide bridge links cysteine 42 with cysteine 110. Residue asparagine 84 is glycosylated (N-linked (GlcNAc...) asparagine).

Alpha-beta TR is a heterodimer composed of an alpha and beta chain; disulfide-linked. The alpha-beta TR is associated with the transmembrane signaling CD3 coreceptor proteins to form the TR-CD3 (TcR or TCR). The assembly of alpha-beta TR heterodimers with CD3 occurs in the endoplasmic reticulum where a single alpha-beta TR heterodimer associates with one CD3D-CD3E heterodimer, one CD3G-CD3E heterodimer and one CD247 homodimer forming a stable octameric structure. CD3D-CD3E and CD3G-CD3E heterodimers preferentially associate with TR alpha and TR beta chains, respectively. The association of the CD247 homodimer is the last step of TcR assembly in the endoplasmic reticulum and is required for transport to the cell surface.

It localises to the cell membrane. Its function is as follows. V region of the variable domain of T cell receptor (TR) beta chain that participates in the antigen recognition. Alpha-beta T cell receptors are antigen specific receptors which are essential to the immune response and are present on the cell surface of T lymphocytes. Recognize peptide-major histocompatibility (MH) (pMH) complexes that are displayed by antigen presenting cells (APC), a prerequisite for efficient T cell adaptive immunity against pathogens. Binding of alpha-beta TR to pMH complex initiates TR-CD3 clustering on the cell surface and intracellular activation of LCK that phosphorylates the ITAM motifs of CD3G, CD3D, CD3E and CD247 enabling the recruitment of ZAP70. In turn ZAP70 phosphorylates LAT, which recruits numerous signaling molecules to form the LAT signalosome. The LAT signalosome propagates signal branching to three major signaling pathways, the calcium, the mitogen-activated protein kinase (MAPK) kinase and the nuclear factor NF-kappa-B (NF-kB) pathways, leading to the mobilization of transcription factors that are critical for gene expression and essential for T cell growth and differentiation. The T cell repertoire is generated in the thymus, by V-(D)-J rearrangement. This repertoire is then shaped by intrathymic selection events to generate a peripheral T cell pool of self-MH restricted, non-autoaggressive T cells. Post-thymic interaction of alpha-beta TR with the pMH complexes shapes TR structural and functional avidity. This is T cell receptor beta variable 6-9 from Homo sapiens (Human).